Reading from the N-terminus, the 363-residue chain is Serpentine receptor class T-55 (363 aa).

Positions 1–18 are cleaved as a signal peptide; the sequence is MKLRHFLIFLMLIPISSS. The next 7 membrane-spanning stretches (helical) occupy residues 70 to 90, 107 to 127, 143 to 163, 187 to 207, 231 to 251, 278 to 298, and 303 to 323; these read IYYI…IWVF, VFIG…PGFV, IVGK…AFLG, WLTV…TVLF, FLYF…ACLC, ICIS…FVLP, and FFHV…IMYI.

This sequence belongs to the nematode receptor-like protein srt family.

It is found in the membrane. In Caenorhabditis elegans, this protein is Serpentine receptor class T-55 (srt-55).